The sequence spans 356 residues: Phospho-2-dehydro-3-deoxyheptonate aldolase, Tyr-sensitive (356 aa).

It belongs to the class-I DAHP synthase family. It depends on a divalent metal cation as a cofactor.

It carries out the reaction D-erythrose 4-phosphate + phosphoenolpyruvate + H2O = 7-phospho-2-dehydro-3-deoxy-D-arabino-heptonate + phosphate. It participates in metabolic intermediate biosynthesis; chorismate biosynthesis; chorismate from D-erythrose 4-phosphate and phosphoenolpyruvate: step 1/7. With respect to regulation, specifically feedback inhibited by tyrosine with 50% inhibition observed at 9 microM tyrosine, pH 7.0. In terms of biological role, stereospecific condensation of phosphoenolpyruvate (PEP) and D-erythrose-4-phosphate (E4P) giving rise to 3-deoxy-D-arabino-heptulosonate-7-phosphate (DAHP). The protein is Phospho-2-dehydro-3-deoxyheptonate aldolase, Tyr-sensitive (aroF) of Escherichia coli (strain K12).